We begin with the raw amino-acid sequence, 541 residues long: Propionyl-CoA carboxylase beta chain, mitochondrial (541 aa).

Residues Met1–Arg28 constitute a mitochondrion transit peptide. Residues Pro34–Glu292 form the CoA carboxyltransferase N-terminal domain. The carboxyltransferase stretch occupies residues Pro34–Lys535. Ser73 carries the phosphoserine modification. Lys101 is subject to N6-acetyllysine; alternate. Residue Lys101 is modified to N6-succinyllysine; alternate. Position 250 is an N6-succinyllysine (Lys250). The CoA carboxyltransferase C-terminal domain occupies Pro296 to Lys535. The tract at residues Asp327–Gln360 is acyl-CoA binding. N6-acetyllysine; alternate occurs at positions 476 and 491. N6-succinyllysine; alternate occurs at positions 476 and 491.

The protein belongs to the AccD/PCCB family. In terms of assembly, the holoenzyme is a dodecamer composed of 6 PCCA/alpha subunits and 6 PCCB/beta subunits. Broadly expressed. Most abundantly expressed in the kidney, liver, small intestine and stomach.

The protein localises to the mitochondrion matrix. It catalyses the reaction propanoyl-CoA + hydrogencarbonate + ATP = (S)-methylmalonyl-CoA + ADP + phosphate + H(+). It carries out the reaction butanoyl-CoA + hydrogencarbonate + ATP = (2S)-ethylmalonyl-CoA + ADP + phosphate + H(+). The protein operates within metabolic intermediate metabolism; propanoyl-CoA degradation; succinyl-CoA from propanoyl-CoA: step 1/3. Its function is as follows. This is one of the 2 subunits of the biotin-dependent propionyl-CoA carboxylase (PCC), a mitochondrial enzyme involved in the catabolism of odd chain fatty acids, branched-chain amino acids isoleucine, threonine, methionine, and valine and other metabolites. Propionyl-CoA carboxylase catalyzes the carboxylation of propionyl-CoA/propanoyl-CoA to D-methylmalonyl-CoA/(S)-methylmalonyl-CoA. Within the holoenzyme, the alpha subunit catalyzes the ATP-dependent carboxylation of the biotin carried by the biotin carboxyl carrier (BCC) domain, while the beta subunit then transfers the carboxyl group from carboxylated biotin to propionyl-CoA. Propionyl-CoA carboxylase also significantly acts on butyryl-CoA/butanoyl-CoA, which is converted to ethylmalonyl-CoA/(2S)-ethylmalonyl-CoA. Other alternative minor substrates include (2E)-butenoyl-CoA/crotonoyl-CoA. The polypeptide is Propionyl-CoA carboxylase beta chain, mitochondrial (Mus musculus (Mouse)).